An 813-amino-acid chain; its full sequence is MKAFPKNYNFTENEKKWQRIWQEKQIYAYDPNISKEETYIVDTPPPTVSGQLHIGHVYSYTQTDFIVRFQRMIGKNIFYPMGFDDNGLPTERLVEKQKQIKAYNIGRNKFIQICEEVVASEEEKFRGLLNKIALSVDWSLEYQTISPLSQKISQMSFLDLVKRGEIYRNDQPILWDPVDGTALAQADIKDTENSSLMNYITFKTEQGEPLTIATTRPELLPACVAVFYHPDDRHYKHLAGKFVITPLFKDKVPLLADPLVQQDKGTGLVMCCTFGDQTDITWWKTHNLPLKTIITKKGTIDFPNDIGIDRLKIKEARAKIIDILKEQNLLIKQEEITHIVKCAERSGSPLEILTMPQWFVKTISHKEALLKRANELNWHPKNMKIRLENWINAISWDWCISRQRCFGVPFPVWYSKRVGEEGKILYADIAQLPVDPLRDLPIGYSRDEVEPDLDVMDTWATSSVSPQLSTHGISDDFAINKNRHDKLFPMDLRPQAHEIIRTWAFYTILKAHLHQNTLPWKNIMVSGWCLAEDRSKMSKSKGNVLVPEKLLEQYGSDVIRYWSANSKLGADTAYSEDVMKNGKRLVNKLWNAAKFVSIHLHKLKDQDKKAKLLEVKEIITNEFDKWMINKLVELVNAVTNELQNYEYANAMHLTEKFFLAVFCDNYLEISKTRAYDEDNKNLSGQYSSILTLYHVMQTLLKLFAPFMPHITEELYQILYNDKESIHIKGTFANHDNLHYNIDTKQAEGMLKILDIVRKFKAEKNLSIKAPIKLLKISGIVLSEELAEDLKNVTSAEEIKFEIQDNKIKIDIII.

Positions 46–56 (PTVSGQLHIGH) match the 'HIGH' region motif. The 'KMSKS' region motif lies at 536 to 540 (KMSKS). Residue Lys539 participates in ATP binding.

This sequence belongs to the class-I aminoacyl-tRNA synthetase family. ValS type 2 subfamily. In terms of assembly, monomer.

The protein resides in the cytoplasm. The catalysed reaction is tRNA(Val) + L-valine + ATP = L-valyl-tRNA(Val) + AMP + diphosphate. Its function is as follows. Catalyzes the attachment of valine to tRNA(Val). As ValRS can inadvertently accommodate and process structurally similar amino acids such as threonine, to avoid such errors, it has a 'posttransfer' editing activity that hydrolyzes mischarged Thr-tRNA(Val) in a tRNA-dependent manner. The polypeptide is Valine--tRNA ligase (Rickettsia canadensis (strain McKiel)).